Reading from the N-terminus, the 88-residue chain is UPF0213 protein SAG0778 (88 aa).

Residues valine 4–tyrosine 80 form the GIY-YIG domain.

It belongs to the UPF0213 family.

The protein is UPF0213 protein SAG0778 of Streptococcus agalactiae serotype V (strain ATCC BAA-611 / 2603 V/R).